We begin with the raw amino-acid sequence, 251 residues long: Flap endonuclease Xni (251 aa).

Position 104 (D104) interacts with Mg(2+). Residues 160 to 249 (VLPRQLPDYW…IDGNLQQLRL (90 aa)) form the 5'-3' exonuclease domain. Positions 171, 172, 180, 182, and 185 each coordinate K(+). The tract at residues 184–189 (GIGPKS) is interaction with DNA.

The protein belongs to the Xni family. It depends on Mg(2+) as a cofactor. K(+) is required as a cofactor.

Functionally, has flap endonuclease activity. During DNA replication, flap endonucleases cleave the 5'-overhanging flap structure that is generated by displacement synthesis when DNA polymerase encounters the 5'-end of a downstream Okazaki fragment. The protein is Flap endonuclease Xni of Salmonella dublin (strain CT_02021853).